The sequence spans 552 residues: Serine protease 53 (552 aa).

The first 23 residues, 1 to 23 (MRQSWRPELLIVGAVVVIEGLQA), serve as a signal peptide directing secretion. Peptidase S1 domains follow at residues 24 to 273 (AQRA…AHVH) and 294 to 525 (VACG…NLDW). The interval 27-46 (ACGQRGPGPPEPQEGNTLPG) is disordered. Cys-62 and Cys-78 are oxidised to a cystine. Catalysis depends on charge relay system residues His-77 and Asp-128. 4 cysteine pairs are disulfide-bonded: Cys-158–Cys-230, Cys-187–Cys-209, Cys-220–Cys-249, and Cys-326–Cys-342. Residues Ser-224, His-341, and Asp-382 each act as charge relay system in the active site. Intrachain disulfides connect Cys-443/Cys-463 and Cys-473/Cys-501. The Charge relay system role is filled by Ser-477.

Belongs to the peptidase S1 family.

The protein resides in the secreted. In vitro can degrade the fibrinogen alpha chain of as well as pro-urokinase-type plasminogen activator. This chain is Serine protease 53 (Prss53), found in Mus musculus (Mouse).